We begin with the raw amino-acid sequence, 429 residues long: SVP1-like protein 2 (429 aa).

WD repeat units follow at residues 10 to 48, 50 to 96, 178 to 218, and 223 to 262; these read PVLAPVLSVTFNHDNSCFAVGLDHGFRIYESGSCVLRTS, DFGA…QVGV, AHTS…RLYE, and IDKAIIFSIGFSPSGKYLACTSDKSTLHVFDVTRPGGTRP. Positions 262–297 are disordered; that stretch reads PITSNGGTAYAAGEPSVTGNNRPSSPYSVASSSGGG.

It belongs to the WD repeat PROPPIN family.

Its subcellular location is the vacuole membrane. It localises to the cytoplasmic vesicle membrane. Functionally, involved in mitochondrial or peroxisomal functions and amino acid signaling pathways. This is SVP1-like protein 2 (apg-14) from Neurospora crassa (strain ATCC 24698 / 74-OR23-1A / CBS 708.71 / DSM 1257 / FGSC 987).